The chain runs to 208 residues: N-(5'-phosphoribosyl)anthranilate isomerase (208 aa).

The protein belongs to the TrpF family.

It catalyses the reaction N-(5-phospho-beta-D-ribosyl)anthranilate = 1-(2-carboxyphenylamino)-1-deoxy-D-ribulose 5-phosphate. It participates in amino-acid biosynthesis; L-tryptophan biosynthesis; L-tryptophan from chorismate: step 3/5. This is N-(5'-phosphoribosyl)anthranilate isomerase from Pyrococcus furiosus (strain ATCC 43587 / DSM 3638 / JCM 8422 / Vc1).